The sequence spans 340 residues: Phosphoribosylformylglycinamidine cyclo-ligase (340 aa).

This sequence belongs to the AIR synthase family.

It localises to the cytoplasm. It catalyses the reaction 2-formamido-N(1)-(5-O-phospho-beta-D-ribosyl)acetamidine + ATP = 5-amino-1-(5-phospho-beta-D-ribosyl)imidazole + ADP + phosphate + H(+). It participates in purine metabolism; IMP biosynthesis via de novo pathway; 5-amino-1-(5-phospho-D-ribosyl)imidazole from N(2)-formyl-N(1)-(5-phospho-D-ribosyl)glycinamide: step 2/2. The protein is Phosphoribosylformylglycinamidine cyclo-ligase of Streptococcus pyogenes serotype M6 (strain ATCC BAA-946 / MGAS10394).